Consider the following 364-residue polypeptide: Glycerol dehydrogenase (364 aa).

Asp37, Gly92, Lys93, Thr114, and Ser117 together coordinate NAD(+). Position 119 (Asp119) interacts with glycerol. Ser123, Leu125, and Tyr129 together coordinate NAD(+). Glycerol contacts are provided by Asp169, His252, and His269. Zn(2+)-binding residues include Asp169, His252, and His269.

Belongs to the iron-containing alcohol dehydrogenase family. Zn(2+) serves as cofactor.

It catalyses the reaction glycerol + NAD(+) = dihydroxyacetone + NADH + H(+). Its pathway is polyol metabolism; glycerol fermentation; glycerone phosphate from glycerol (oxidative route): step 1/2. Its function is as follows. Catalyzes the NAD-dependent oxidation of glycerol to dihydroxyacetone (glycerone). This chain is Glycerol dehydrogenase (gldA), found in Thermotoga maritima (strain ATCC 43589 / DSM 3109 / JCM 10099 / NBRC 100826 / MSB8).